Reading from the N-terminus, the 324-residue chain is Short-chain dehydrogenase/reductase iacJ (324 aa).

NADP(+) contacts are provided by Ile42, Lys66, Asp93, Asn120, Tyr204, Lys208, and Thr239. Catalysis depends on Tyr204, which acts as the Proton donor. Lys208 (lowers pKa of active site Tyr) is an active-site residue.

It belongs to the short-chain dehydrogenases/reductases (SDR) family.

It functions in the pathway secondary metabolite biosynthesis. Functionally, short-chain dehydrogenase/reductase; part of the gene cluster that mediates the biosynthesis of iso-A82775C, a enylepoxycyclohexane and biosynthetic precursor of the chloropestolide anticancer natural products. Within the cluster, the prenyltransferase iacE prenylates siccayne to generate pestalodiol E, using dimethylallyl diphosphate (DMAPP) as cosubstrate. The probable oxidoreductase iacF is then involved in the epoxidation of pestalodiol F to pestalodiol F, which is further converted to pestalofone A by the short-chain dehydrogenase/reductase iacG. Iso-A82775C is subsequently generated from pestalofone A by the short-chain dehydrogenase/reductase iacC. Iso-A82775C is further condensed with maldoxin via a Diels-Alder reaction to produce the anticancer natural products chloropestolides A to E. In Pestalotiopsis fici (strain W106-1 / CGMCC3.15140), this protein is Short-chain dehydrogenase/reductase iacJ.